The primary structure comprises 249 residues: Pyridoxine 5'-phosphate synthase (249 aa).

3-amino-2-oxopropyl phosphate is bound at residue Asn-7. 9–10 (DH) contributes to the 1-deoxy-D-xylulose 5-phosphate binding site. Residue Arg-18 coordinates 3-amino-2-oxopropyl phosphate. His-43 (proton acceptor) is an active-site residue. 1-deoxy-D-xylulose 5-phosphate is bound by residues Arg-45 and His-50. Glu-70 serves as the catalytic Proton acceptor. Thr-100 lines the 1-deoxy-D-xylulose 5-phosphate pocket. The Proton donor role is filled by His-190. 3-amino-2-oxopropyl phosphate contacts are provided by residues Gly-191 and 212-213 (GH).

The protein belongs to the PNP synthase family. In terms of assembly, homooctamer; tetramer of dimers.

Its subcellular location is the cytoplasm. The catalysed reaction is 3-amino-2-oxopropyl phosphate + 1-deoxy-D-xylulose 5-phosphate = pyridoxine 5'-phosphate + phosphate + 2 H2O + H(+). It functions in the pathway cofactor biosynthesis; pyridoxine 5'-phosphate biosynthesis; pyridoxine 5'-phosphate from D-erythrose 4-phosphate: step 5/5. Its function is as follows. Catalyzes the complicated ring closure reaction between the two acyclic compounds 1-deoxy-D-xylulose-5-phosphate (DXP) and 3-amino-2-oxopropyl phosphate (1-amino-acetone-3-phosphate or AAP) to form pyridoxine 5'-phosphate (PNP) and inorganic phosphate. In Synechococcus sp. (strain CC9902), this protein is Pyridoxine 5'-phosphate synthase.